A 97-amino-acid chain; its full sequence is MDVFLGIGIALAGYFIGEGLKQRNQTKGNEQNDIFLIKERDIYFYIGLFLGITTTEAKQLAGDMADLPYIEINGKKYVQKHMLKDWTFTLVEKHQGE.

This is an uncharacterized protein from Bacillus subtilis (strain 168).